Here is an 806-residue protein sequence, read N- to C-terminus: MATERLTRVHSLRERLDETLTANRNEILALLSRIEAKGKGILQHHQVIAEFEEIPEENRQKLTDGAFGEVLRSTQEAIVLPPWVALAVRPRPGVWEYLRVNVHALVVENLQPAEFLKFKEELVDGSANGNFVLELDFEPFTASFPRPTLNKSIGNGVQFLNRHLSAKLFHDKESLHPLLEFLRLHSYKGKTLMLNDRIQNPDSLQHVLRKAEEYLSTVDPETPYSEFEHRFQEIGLERGWGDSAERVLESIQLLLDLLEAPDPCTLETFLDRIPMVFNVVILSPHGYFAQDDVLGYPDTGGQVVYILDQVRALESEMLNRIKKQGLDIVPRILIITRLLPDAVGTTCGQRLEKVYGTEHCHILRVPFRDQKGIVRKWISRFEVWPYLETYTEDVAHELAKELQGKPDLIVGNYSDGNIVASLLAHKLGVTQCTIAHALEKTKYPESDIYWKKFEEKYHFSCQFTADLFAMNHTDFIITSTFQEIAGSKDTVGQYESHTAFTLPGLYRVVHGIDVFDPKFNIVSPGADQTIYFPYTETSRRLTSFYPEIEELLYSTVENEEHICVLKDRSKPIIFTMARLDRVKNITGLVEWYGKNAKLRELVNLVVVAGDRRKESKDLEEKAEMKKMYELIETYKLNGQFRWISSQMNRVRNGELYRVICDTKGAFVQPAVYEAFGLTVVEAMATGLPTFATLNGGPAEIIVHGKSGFHIDPYHGDRAADLLVEFFEKVKADPSHWDKISLGGLQRIEEKYTWQIYSQRLLTLTGVYGFWKHVSNLDRLESRRYLEMFYALKYRKLAESVPLAVEE.

Residues 275-752 (MVFNVVILSP…GLQRIEEKYT (478 aa)) form a GT-B glycosyltransferase region.

This sequence belongs to the glycosyltransferase 1 family. Plant sucrose synthase subfamily.

It carries out the reaction an NDP-alpha-D-glucose + D-fructose = a ribonucleoside 5'-diphosphate + sucrose + H(+). Functionally, sucrose-cleaving enzyme that provides UDP-glucose and fructose for various metabolic pathways. This Vicia faba (Broad bean) protein is Sucrose synthase (SUCS).